The chain runs to 485 residues: Noelin (485 aa).

The signal sequence occupies residues 1-24 (MSVPLLKIGVVLSTMAMITNWMSQ). N-linked (GlcNAc...) asparagine glycans are attached at residues Asn33, Asn103, Asn187, Asn288, Asn307, Asn394, Asn431, and Asn473. Residues 87 to 225 (RDARTKQLRQ…ERLRACMQKL (139 aa)) are a coiled coil. The region spanning 226–478 (ACGKLTGISD…QTLYNVTLFH (253 aa)) is the Olfactomedin-like domain. A disulfide bond links Cys227 and Cys409.

Homotetramer; disulfide-linked. Dimer of dimers, giving rise to a V-shaped homotretramer. Isoform 1 and isoform 3 interact with RTN4R. Identified in a complex with RTN4R and LINGO1. Peripherally associated with AMPAR complex. AMPAR complex consists of an inner core made of 4 pore-forming GluA/GRIA proteins (GRIA1, GRIA2, GRIA3 and GRIA4) and 4 major auxiliary subunits arranged in a twofold symmetry. One of the two pairs of distinct binding sites is occupied either by CNIH2, CNIH3 or CACNG2, CACNG3. The other harbors CACNG2, CACNG3, CACNG4, CACNG8 or GSG1L. This inner core of AMPAR complex is complemented by outer core constituents binding directly to the GluA/GRIA proteins at sites distinct from the interaction sites of the inner core constituents. Outer core constituents include at least PRRT1, PRRT2, CKAMP44/SHISA9, FRRS1L and NRN1. The proteins of the inner and outer core serve as a platform for other, more peripherally associated AMPAR constituents, including OLFM1. Alone or in combination, these auxiliary subunits control the gating and pharmacology of the AMPAR complex and profoundly impact their biogenesis and protein processing. Interacts with OLFM2. In isoform 3 and isoform 4, the signal peptide is predicted to end in position 17. In terms of tissue distribution, expressed in the brain (at protein level). Expressed in the brain, predominantly in the cortex and hippocampus. In the pituitary only the two A-type and in the adrenal glands only the two B-type forms were detected.

It localises to the secreted. Its subcellular location is the synapse. The protein resides in the endoplasmic reticulum. It is found in the cell projection. The protein localises to the axon. It localises to the perikaryon. In terms of biological role, contributes to the regulation of axonal growth in the embryonic and adult central nervous system by inhibiting interactions between RTN4R and LINGO1. Inhibits RTN4R-mediated axon growth cone collapse. May play an important role in regulating the production of neural crest cells by the neural tube. May be required for normal responses to olfactory stimuli. This Rattus norvegicus (Rat) protein is Noelin (Olfm1).